We begin with the raw amino-acid sequence, 231 residues long: Adenosylcobinamide-GDP ribazoletransferase (231 aa).

The next 5 membrane-spanning stretches (helical) occupy residues 28 to 48, 97 to 117, 121 to 141, 162 to 182, and 209 to 229; these read LWLF…PHFI, TGAG…TLLY, FWEI…LMLL, VFIG…ESLA, and VIGS…TIAG.

It belongs to the CobS family. Mg(2+) serves as cofactor.

It localises to the cell membrane. The catalysed reaction is alpha-ribazole + adenosylcob(III)inamide-GDP = adenosylcob(III)alamin + GMP + H(+). The enzyme catalyses alpha-ribazole 5'-phosphate + adenosylcob(III)inamide-GDP = adenosylcob(III)alamin 5'-phosphate + GMP + H(+). It functions in the pathway cofactor biosynthesis; adenosylcobalamin biosynthesis; adenosylcobalamin from cob(II)yrinate a,c-diamide: step 7/7. Functionally, joins adenosylcobinamide-GDP and alpha-ribazole to generate adenosylcobalamin (Ado-cobalamin). Also synthesizes adenosylcobalamin 5'-phosphate from adenosylcobinamide-GDP and alpha-ribazole 5'-phosphate. This is Adenosylcobinamide-GDP ribazoletransferase (cobS2) from Archaeoglobus fulgidus (strain ATCC 49558 / DSM 4304 / JCM 9628 / NBRC 100126 / VC-16).